The sequence spans 151 residues: 3-hydroxyacyl-[acyl-carrier-protein] dehydratase FabZ (151 aa).

His-54 is an active-site residue.

It belongs to the thioester dehydratase family. FabZ subfamily. As to quaternary structure, oligomer. Post-translationally, the N-terminus is blocked.

It is found in the cytoplasm. It catalyses the reaction a (3R)-hydroxyacyl-[ACP] = a (2E)-enoyl-[ACP] + H2O. In terms of biological role, involved in unsaturated fatty acids biosynthesis. Catalyzes the dehydration of short chain beta-hydroxyacyl-ACPs and long chain saturated and unsaturated beta-hydroxyacyl-ACPs. The polypeptide is 3-hydroxyacyl-[acyl-carrier-protein] dehydratase FabZ (Escherichia coli O9:H4 (strain HS)).